The sequence spans 479 residues: Xylose isomerase (479 aa).

Residue histidine 144 is part of the active site. Positions 275, 311, 314, 339, 350, 352, and 382 each coordinate Mn(2+).

This sequence belongs to the xylose isomerase family. In terms of assembly, homodimer. Mn(2+) is required as a cofactor.

The catalysed reaction is alpha-D-xylose = alpha-D-xylulofuranose. This is Xylose isomerase (XYLA) from Hordeum vulgare (Barley).